Reading from the N-terminus, the 4834-residue chain is E3 ubiquitin-protein ligase HERC2 (4834 aa).

Residues 50–88 are disordered; it reads TESTQNGELPPRKDDSVEPSGTKKEDLNDKEKKDEEETP. A compositionally biased stretch (basic and acidic residues) spans 59–84; it reads PPRKDDSVEPSGTKKEDLNDKEKKDE. T272 carries the post-translational modification Phosphothreonine. An RCC1 1-1 repeat occupies 415 to 461; that stretch reads PTSHKGSLQEVIGWGLIGWKYYANVIGPIQCEGLANLGVTQIACAEK. The stretch at 462–512 is one RCC1 1-2 repeat; sequence RFLILSRNGRVYTQAYNSDTLAPQLVQGLASRNIVKIAAHSDGHHYLALAA. The RCC1 1-3 repeat unit spans residues 513–568; it reads TGEVYSWGCGDGGRLGHGDTVPLEEPKVISAFSGKQAGKHVVHIACGSTYSAAITA. One copy of the RCC1 1-4 repeat lies at 569 to 620; it reads EGELYTWGRGNYGRLGHGSSEDEAIPMLVAGLKGLKVIDVACGSGDAQTLAV. One copy of the RCC1 1-5 repeat lies at 623 to 674; that stretch reads NGQVWSWGDGDYGKLGRGGSDGCKTPKLIEKLQDLDVVKVRCGSQFSIALTK. At T647 the chain carries Phosphothreonine. Residues 675-726 form an RCC1 1-6 repeat; sequence DGQVYSWGKGDNQRLGHGTEEHVRYPKLLEGLQGKKVIDVAAGSTHCLALTE. One copy of the RCC1 1-7 repeat lies at 728 to 778; that stretch reads SEVHSWGSNDQCQHFDTLRVTKPEPAALPGLDTKHIVGIACGPAQSFAWSS. Positions 948–980 form a coiled coil; it reads LHAAITAEIQDIEAKKEAQKEKEIDEQEANAST. A Cytochrome b5 heme-binding domain is found at 1207–1283; that stretch reads VTLIRKADLE…MHAFCVGQYL (77 aa). A disordered region spans residues 1555–1575; it reads RKKRVPKKPESTDDEEKIGNE. A compositionally biased stretch (acidic residues) spans 1566–1575; the sequence is TDDEEKIGNE. S1577 bears the Phosphoserine mark. The 74-residue stretch at 1859 to 1932 folds into the MIB/HERC2 domain; it reads SGPELAAMMK…KYDLKLAELP (74 aa). The disordered stretch occupies residues 1933-1958; it reads AAAQPSAEDSDTEDDSEAEQTERNIH. Over residues 1940–1951 the composition is skewed to acidic residues; it reads EDSDTEDDSEAE. A Phosphoserine modification is found at S1942. The residue at position 1944 (T1944) is a Phosphothreonine. S2454 carries the phosphoserine modification. Positions 2554–2630 constitute a CPH domain; that stretch reads RADFLSNDDY…RYIHVELIGY (77 aa). Residues 2703–2755 form a ZZ-type zinc finger; it reads HPGVTCDGCQMFPINGSRFKCRNCDDFDFCETCFKTKKHNTRHTFGRINEPGQ. The Zn(2+) site is built by C2708, C2711, C2723, C2726, C2732, C2735, H2741, and H2745. The region spanning 2759 to 2936 is the DOC domain; that stretch reads FCGRSGKQLK…ASDNEEEEDE (178 aa). At S2928 the chain carries Phosphoserine. The stretch at 2958–3009 is one RCC1 2-1 repeat; that stretch reads RTKVFVWGLNDKDQLGGLKGSKIKVPSFSETLSALNVVQVAGGSKSLFAVTV. Residues 3010–3064 form an RCC1 2-2 repeat; that stretch reads EGKVYACGEATNGRLGLGISSGTVPIPRQITALSSYVVKKVAVHSGGRHATALTV. The stretch at 3065-3116 is one RCC1 2-3 repeat; that stretch reads DGKVFSWGEGDDGKLGHFSRMNCDKPRLIEALKTKRIRDIACGSSHSAALTS. Residues 3118-3168 form an RCC1 2-4 repeat; sequence GELYTWGLGEYGRLGHGDNTTQLKPKMVKVLLGHRVIQVACGSRDAQTLAL. An RCC1 2-5 repeat occupies 3171-3222; that stretch reads EGLVFSWGDGDFGKLGRGGSEGCNIPQNIERLNGQGVCQIECGAQFSLALTK. The RCC1 2-6 repeat unit spans residues 3224–3274; the sequence is GVVWTWGKGDYFRLGHGSDVHVRKPQVVEGLRGKKIVHVAVGALHCLAVTD. One copy of the RCC1 2-7 repeat lies at 3275–3326; it reads SGQVYAWGDNDHGQQGNGTTTVNRKPTLVQGLEGQKITRVACGSSHSVAWTT. Composition is skewed to polar residues over residues 3602–3611 and 3618–3629; these read SQSGRLSSQP and HPYTDDTSTSGT. Positions 3602-3629 are disordered; that stretch reads SQSGRLSSQPVVVESSHPYTDDTSTSGT. One copy of the RCC1 3-1 repeat lies at 3951–4002; sequence SGTIYGWGHNHRGQLGGIEGAKVKVPTPCEALATLRPVQLIGGEQTLFAVTA. An RCC1 3-2 repeat occupies 4004-4056; the sequence is GKLYATGYGAGGRLGIGGTESVSTPTLLESIQHVFIKKVAVNSGGKHCLALSS. One copy of the RCC1 3-3 repeat lies at 4058-4108; that stretch reads GEVYSWGEAEDGKLGHGNRSPCDRPRVIESLRGIEVVDVAAGGAHSACVTA. One copy of the RCC1 3-4 repeat lies at 4110–4162; it reads GDLYTWGKGRYGRLGHSDSEDQLKPKLVEALQGHRVVDIACGSGDAQTLCLTD. The stretch at 4164–4214 is one RCC1 3-5 repeat; the sequence is DTVWSWGDGDYGKLGRGGSDGCKVPMKIDSLTGLGVVKVECGSQFSVALTK. One copy of the RCC1 3-6 repeat lies at 4216–4266; it reads GAVYTWGKGDYHRLGHGSDDHVRRPRQVQGLQGKKVIAIATGSLHCVCCTE. The stretch at 4268–4318 is one RCC1 3-7 repeat; sequence GEVYTWGDNDEGQLGDGTTNAIQRPRLVAALQGKKVNRVACGSAHTLAWST. The 338-residue stretch at 4457-4794 folds into the HECT domain; sequence DSLLLPHRVW…IHFCKSIDTD (338 aa). The active-site Glycyl thioester intermediate is C4762. Residues 4804-4834 are disordered; it reads EPAADDSSDDSDNEDVDSFASDSTQDYLTGH. Residues 4806 to 4820 show a composition bias toward acidic residues; it reads AADDSSDDSDNEDVD. Phosphoserine occurs at positions 4810, 4811, and 4814. Positions 4823–4834 are enriched in polar residues; it reads ASDSTQDYLTGH. T4827 is subject to Phosphothreonine.

As to quaternary structure, interacts (when phosphorylated at Thr-4827 and sumoylated) with RNF8 (via FHA domain); this interaction increases after ionizing radiation (IR) treatment. Interacts with XPA. Interacts with NEURL4. Via its interaction with NEURL4, may indirectly interact with CCP110 and CEP97. Phosphorylation at Thr-4827 is required for interaction with RNF8. Post-translationally, sumoylated with SUMO1 by PIAS4 in response to double-strand breaks (DSBs), promoting the interaction with RNF8.

Its subcellular location is the cytoplasm. It localises to the cytoskeleton. The protein localises to the microtubule organizing center. It is found in the centrosome. The protein resides in the centriole. Its subcellular location is the nucleus. It catalyses the reaction S-ubiquitinyl-[E2 ubiquitin-conjugating enzyme]-L-cysteine + [acceptor protein]-L-lysine = [E2 ubiquitin-conjugating enzyme]-L-cysteine + N(6)-ubiquitinyl-[acceptor protein]-L-lysine.. Its pathway is protein modification; protein ubiquitination. Functionally, E3 ubiquitin-protein ligase that regulates ubiquitin-dependent retention of repair proteins on damaged chromosomes. Recruited to sites of DNA damage in response to ionizing radiation (IR) and facilitates the assembly of UBE2N and RNF8 promoting DNA damage-induced formation of 'Lys-63'-linked ubiquitin chains. Acts as a mediator of binding specificity between UBE2N and RNF8. Involved in the maintenance of RNF168 levels. E3 ubiquitin-protein ligase that promotes the ubiquitination and proteasomal degradation of XPA which influences the circadian oscillation of DNA excision repair activity. By controlling the steady-state expression of the IGF1R receptor, indirectly regulates the insulin-like growth factor receptor signaling pathway. Also modulates iron metabolism by regulating the basal turnover of FBXL5. The protein is E3 ubiquitin-protein ligase HERC2 of Homo sapiens (Human).